A 244-amino-acid polypeptide reads, in one-letter code: Ribonuclease 3 (244 aa).

The region spanning 5–136 (LAELERAIGI…LVGAIYLDQG (132 aa)) is the RNase III domain. Glu49 provides a ligand contact to Mg(2+). The active site involves Asp53. Positions 122 and 125 each coordinate Mg(2+). Glu125 is a catalytic residue. Residues 161–229 (DPTTRLQELM…ARKALAAWDK (69 aa)) form the DRBM domain.

This sequence belongs to the ribonuclease III family. As to quaternary structure, homodimer. Mg(2+) serves as cofactor.

It localises to the cytoplasm. The enzyme catalyses Endonucleolytic cleavage to 5'-phosphomonoester.. Functionally, digests double-stranded RNA. Involved in the processing of primary rRNA transcript to yield the immediate precursors to the large and small rRNAs (23S and 16S). Processes some mRNAs, and tRNAs when they are encoded in the rRNA operon. Processes pre-crRNA and tracrRNA of type II CRISPR loci if present in the organism. This chain is Ribonuclease 3, found in Chloroflexus aurantiacus (strain ATCC 29364 / DSM 637 / Y-400-fl).